The following is a 309-amino-acid chain: Non-homologous end-joining factor 1 (309 aa).

The tract at residues 1-134 (MEAVLSALPW…TPVAVVCRQL (134 aa)) is globular head. The segment at 223 to 298 (GKTGRKRKHS…AGSEDRSTSR (76 aa)) is C-terminal tail. The segment at 223–309 (GKTGRKRKHS…KKKKAVGLFR (87 aa)) is disordered. Over residues 243 to 252 (HITDHQHISE) the composition is skewed to basic and acidic residues. Polar residues-rich tracts occupy residues 253 to 265 (STDV…SQEH) and 273 to 290 (RSQV…STAG). Residues 297-309 (SRAKKKKAVGLFR) are compositionally biased toward basic residues. An XLM motif is present at residues 299–309 (AKKKKAVGLFR).

This sequence belongs to the XRCC4-XLF family. XLF subfamily. Homodimer. Interacts with xrcc4; the interaction is direct and is mediated via a head-to-head interaction between N-terminal head regions. Component of the core long-range non-homologous end joining (NHEJ) complex (also named DNA-PK complex) composed of prkdc/DNA-PKcs, lig4, xrcc4, xrcc6/Ku70, xrcc5/Ku80 and nhej1/xlf.

The protein localises to the nucleus. The protein resides in the chromosome. DNA repair protein involved in DNA non-homologous end joining (NHEJ); it is required for double-strand break (DSB) repair and V(D)J recombination and is also involved in telomere maintenance. Plays a key role in NHEJ by promoting the ligation of various mismatched and non-cohesive ends. In some studies, has been shown to associate with xrcc4 to form alternating helical filaments that bridge DNA and act like a bandage, holding together the broken DNA until it is repaired. Alternatively, it has also been shown that rather than forming filaments, a single nhej1 dimer interacts through both head domains with xrcc4 to promote the close alignment of DNA ends. The xrcc4-nhej1/xlf subcomplex binds to the DNA fragments of a DSB in a highly diffusive manner and robustly bridges two independent DNA molecules, holding the broken DNA fragments in close proximity to one other. The mobility of the bridges ensures that the ends remain accessible for further processing by other repair factors. In Danio rerio (Zebrafish), this protein is Non-homologous end-joining factor 1 (nhej1).